Here is a 156-residue protein sequence, read N- to C-terminus: MKDQIYMELLKKLKDIVEPICEKYSYELVDLEYRREPHGWVLRVYIDKVGGVTVEDCAYISEKISKELDIKDPIPHSYILEVSSPGLDRPLKRKRDFERHIGEKVNITLLEEIEGKKKVEGKIFKVDEKNVTLKVDDSLMVIPIEKIKKALLIVEF.

This sequence belongs to the RimP family.

Its subcellular location is the cytoplasm. Functionally, required for maturation of 30S ribosomal subunits. The polypeptide is Ribosome maturation factor RimP (Dictyoglomus turgidum (strain DSM 6724 / Z-1310)).